A 178-amino-acid polypeptide reads, in one-letter code: ATP synthase subunit delta (178 aa).

Belongs to the ATPase delta chain family. F-type ATPases have 2 components, F(1) - the catalytic core - and F(0) - the membrane proton channel. F(1) has five subunits: alpha(3), beta(3), gamma(1), delta(1), epsilon(1). F(0) has three main subunits: a(1), b(2) and c(10-14). The alpha and beta chains form an alternating ring which encloses part of the gamma chain. F(1) is attached to F(0) by a central stalk formed by the gamma and epsilon chains, while a peripheral stalk is formed by the delta and b chains.

It localises to the cell inner membrane. F(1)F(0) ATP synthase produces ATP from ADP in the presence of a proton or sodium gradient. F-type ATPases consist of two structural domains, F(1) containing the extramembraneous catalytic core and F(0) containing the membrane proton channel, linked together by a central stalk and a peripheral stalk. During catalysis, ATP synthesis in the catalytic domain of F(1) is coupled via a rotary mechanism of the central stalk subunits to proton translocation. Functionally, this protein is part of the stalk that links CF(0) to CF(1). It either transmits conformational changes from CF(0) to CF(1) or is implicated in proton conduction. This is ATP synthase subunit delta from Pseudomonas entomophila (strain L48).